The chain runs to 885 residues: Dual serine/threonine and tyrosine protein kinase (885 aa).

Residues 614-868 form the Protein kinase domain; sequence PKLGRELGRG…PLLGIVQPGL (255 aa). Residues 620–628 and Lys-643 each bind ATP; that span reads LGRGQYGVV. The active-site Proton acceptor is Asp-739.

The protein belongs to the protein kinase superfamily. Ser/Thr protein kinase family.

It localises to the cytoplasm. The protein localises to the cell membrane. It is found in the apical cell membrane. Its subcellular location is the basolateral cell membrane. The protein resides in the cell junction. It carries out the reaction L-seryl-[protein] + ATP = O-phospho-L-seryl-[protein] + ADP + H(+). The catalysed reaction is L-threonyl-[protein] + ATP = O-phospho-L-threonyl-[protein] + ADP + H(+). It catalyses the reaction L-tyrosyl-[protein] + ATP = O-phospho-L-tyrosyl-[protein] + ADP + H(+). May act as a positive regulator of ERK phosphorylation downstream of fibroblast growth factor-receptor activation. May induce both caspase-dependent apoptosis and caspase-independent cell death. Plays a role in the embryonic development. This Danio rerio (Zebrafish) protein is Dual serine/threonine and tyrosine protein kinase (dstyk).